The chain runs to 394 residues: Elongation factor Tu (394 aa).

The region spanning 10-204 (KPHVNIGTIG…AVDSWIPLPE (195 aa)) is the tr-type G domain. Residues 19-26 (GHVDHGKT) are G1. 19–26 (GHVDHGKT) is a GTP binding site. T26 lines the Mg(2+) pocket. Residues 60-64 (GITIN) are G2. The segment at 81 to 84 (DCPG) is G3. Residues 81–85 (DCPGH) and 136–139 (NKCD) contribute to the GTP site. Residues 136–139 (NKCD) form a G4 region. Residues 174–176 (SGL) form a G5 region.

This sequence belongs to the TRAFAC class translation factor GTPase superfamily. Classic translation factor GTPase family. EF-Tu/EF-1A subfamily. Monomer.

Its subcellular location is the cytoplasm. It carries out the reaction GTP + H2O = GDP + phosphate + H(+). Functionally, GTP hydrolase that promotes the GTP-dependent binding of aminoacyl-tRNA to the A-site of ribosomes during protein biosynthesis. The sequence is that of Elongation factor Tu from Ureaplasma urealyticum serovar 10 (strain ATCC 33699 / Western).